A 143-amino-acid chain; its full sequence is NADH-quinone oxidoreductase subunit A (143 aa).

Helical transmembrane passes span 8–28, 63–83, and 93–113; these read FGNV…GYLT, FYVV…LYPW, and FALI…AYAW.

The protein belongs to the complex I subunit 3 family. In terms of assembly, NDH-1 is composed of 14 different subunits. Subunits NuoA, H, J, K, L, M, N constitute the membrane sector of the complex.

The protein resides in the cell inner membrane. The enzyme catalyses a quinone + NADH + 5 H(+)(in) = a quinol + NAD(+) + 4 H(+)(out). In terms of biological role, NDH-1 shuttles electrons from NADH, via FMN and iron-sulfur (Fe-S) centers, to quinones in the respiratory chain. The immediate electron acceptor for the enzyme in this species is believed to be a menaquinone. Couples the redox reaction to proton translocation (for every two electrons transferred, four hydrogen ions are translocated across the cytoplasmic membrane), and thus conserves the redox energy in a proton gradient. The polypeptide is NADH-quinone oxidoreductase subunit A (Pelodictyon phaeoclathratiforme (strain DSM 5477 / BU-1)).